Reading from the N-terminus, the 184-residue chain is ATP synthase subunit b, chloroplastic (184 aa).

The helical transmembrane segment at 27–49 (LATNLINLSVVLGVLIFFGKGVL) threads the bilayer.

The protein belongs to the ATPase B chain family. As to quaternary structure, F-type ATPases have 2 components, F(1) - the catalytic core - and F(0) - the membrane proton channel. F(1) has five subunits: alpha(3), beta(3), gamma(1), delta(1), epsilon(1). F(0) has four main subunits: a(1), b(1), b'(1) and c(10-14). The alpha and beta chains form an alternating ring which encloses part of the gamma chain. F(1) is attached to F(0) by a central stalk formed by the gamma and epsilon chains, while a peripheral stalk is formed by the delta, b and b' chains.

The protein localises to the plastid. It localises to the chloroplast thylakoid membrane. Functionally, f(1)F(0) ATP synthase produces ATP from ADP in the presence of a proton or sodium gradient. F-type ATPases consist of two structural domains, F(1) containing the extramembraneous catalytic core and F(0) containing the membrane proton channel, linked together by a central stalk and a peripheral stalk. During catalysis, ATP synthesis in the catalytic domain of F(1) is coupled via a rotary mechanism of the central stalk subunits to proton translocation. In terms of biological role, component of the F(0) channel, it forms part of the peripheral stalk, linking F(1) to F(0). The chain is ATP synthase subunit b, chloroplastic from Helianthus annuus (Common sunflower).